We begin with the raw amino-acid sequence, 205 residues long: Small ribosomal subunit protein uS3 (205 aa).

The 69-residue stretch at 12–80 folds into the KH type-2 domain; sequence VRQFLAKELA…PAQINIAEVR (69 aa).

It belongs to the universal ribosomal protein uS3 family. In terms of assembly, part of the 30S ribosomal subunit. Forms a tight complex with proteins S10 and S14.

Functionally, binds the lower part of the 30S subunit head. Binds mRNA in the 70S ribosome, positioning it for translation. The protein is Small ribosomal subunit protein uS3 of Buchnera aphidicola subsp. Acyrthosiphon kondoi (Acyrthosiphon kondoi symbiotic bacterium).